The primary structure comprises 469 residues: Trigger factor (469 aa).

A PPIase FKBP-type domain is found at 162–243; sequence GDFVSIDLSA…VKSVKERELP (82 aa). Residues 438–469 are disordered; that stretch reads GPSGEQAAEDSAEESTDAAEGEAAEDADDTDK. A compositionally biased stretch (acidic residues) spans 444 to 469; that stretch reads AAEDSAEESTDAAEGEAAEDADDTDK.

This sequence belongs to the FKBP-type PPIase family. Tig subfamily.

The protein localises to the cytoplasm. The enzyme catalyses [protein]-peptidylproline (omega=180) = [protein]-peptidylproline (omega=0). Involved in protein export. Acts as a chaperone by maintaining the newly synthesized protein in an open conformation. Functions as a peptidyl-prolyl cis-trans isomerase. The chain is Trigger factor from Mycolicibacterium smegmatis (strain ATCC 700084 / mc(2)155) (Mycobacterium smegmatis).